A 506-amino-acid chain; its full sequence is ATP synthase subunit alpha (506 aa).

Position 171–178 (171–178) interacts with ATP; that stretch reads GDRQTGKT.

The protein belongs to the ATPase alpha/beta chains family. As to quaternary structure, F-type ATPases have 2 components, CF(1) - the catalytic core - and CF(0) - the membrane proton channel. CF(1) has five subunits: alpha(3), beta(3), gamma(1), delta(1), epsilon(1). CF(0) has four main subunits: a, b, b' and c.

It localises to the cellular thylakoid membrane. It catalyses the reaction ATP + H2O + 4 H(+)(in) = ADP + phosphate + 5 H(+)(out). Its function is as follows. Produces ATP from ADP in the presence of a proton gradient across the membrane. The alpha chain is a regulatory subunit. In Nostoc punctiforme (strain ATCC 29133 / PCC 73102), this protein is ATP synthase subunit alpha.